A 250-amino-acid polypeptide reads, in one-letter code: Phosphoribosylaminoimidazole-succinocarboxamide synthase (250 aa).

This sequence belongs to the SAICAR synthetase family.

The catalysed reaction is 5-amino-1-(5-phospho-D-ribosyl)imidazole-4-carboxylate + L-aspartate + ATP = (2S)-2-[5-amino-1-(5-phospho-beta-D-ribosyl)imidazole-4-carboxamido]succinate + ADP + phosphate + 2 H(+). It functions in the pathway purine metabolism; IMP biosynthesis via de novo pathway; 5-amino-1-(5-phospho-D-ribosyl)imidazole-4-carboxamide from 5-amino-1-(5-phospho-D-ribosyl)imidazole-4-carboxylate: step 1/2. This is Phosphoribosylaminoimidazole-succinocarboxamide synthase from Chloroflexus aggregans (strain MD-66 / DSM 9485).